A 771-amino-acid polypeptide reads, in one-letter code: Assimilatory nitrate reductase electron transfer subunit (771 aa).

43 to 79 (YNRILLSSVLQGEASLDDITLNSKDWYDKHGITLYTG) lines the FAD pocket. [2Fe-2S] cluster is bound by residues cysteine 414, cysteine 416, cysteine 449, and cysteine 452.

The cofactor is FAD. Requires [2Fe-2S] cluster as cofactor.

Required for nitrate assimilation. In Bacillus subtilis (strain 168), this protein is Assimilatory nitrate reductase electron transfer subunit (nasB).